The following is a 723-amino-acid chain: Catalase-peroxidase (723 aa).

Residues 98-226 constitute a cross-link (tryptophyl-tyrosyl-methioninium (Trp-Tyr) (with M-252)); it reads WHSAGSYRVG…LAAVMMGLIY (129 aa). The active-site Proton acceptor is His-99. The tryptophyl-tyrosyl-methioninium (Tyr-Met) (with W-98) cross-link spans 226-252; it reads YVNPEGVDGNPDPLKTAKDMRVTFARM. His-267 is a heme b binding site.

It belongs to the peroxidase family. Peroxidase/catalase subfamily. In terms of assembly, homodimer or homotetramer. It depends on heme b as a cofactor. Formation of the three residue Trp-Tyr-Met cross-link is important for the catalase, but not the peroxidase activity of the enzyme.

It catalyses the reaction H2O2 + AH2 = A + 2 H2O. The enzyme catalyses 2 H2O2 = O2 + 2 H2O. Functionally, bifunctional enzyme with both catalase and broad-spectrum peroxidase activity. This is Catalase-peroxidase from Vibrio vulnificus (strain YJ016).